Reading from the N-terminus, the 805-residue chain is Sucrose synthase (805 aa).

Residues 275 to 752 (MVFNVVILSP…GLKRIEEKYT (478 aa)) form a GT-B glycosyltransferase region.

Belongs to the glycosyltransferase 1 family. Plant sucrose synthase subfamily. Expression is at least 10-fold higher in tubers compared to photosynthetically active tissues.

It catalyses the reaction an NDP-alpha-D-glucose + D-fructose = a ribonucleoside 5'-diphosphate + sucrose + H(+). In terms of biological role, sucrose-cleaving enzyme that provides UDP-glucose and fructose for various metabolic pathways. The sequence is that of Sucrose synthase from Solanum tuberosum (Potato).